Here is an 81-residue protein sequence, read N- to C-terminus: Putative membrane protein insertion efficiency factor (81 aa).

It belongs to the UPF0161 family.

The protein localises to the cell inner membrane. Its function is as follows. Could be involved in insertion of integral membrane proteins into the membrane. This is Putative membrane protein insertion efficiency factor from Pseudomonas savastanoi pv. phaseolicola (strain 1448A / Race 6) (Pseudomonas syringae pv. phaseolicola (strain 1448A / Race 6)).